Consider the following 391-residue polypeptide: Succinyl-diaminopimelate desuccinylase (391 aa).

Residue His74 participates in Zn(2+) binding. Asp76 is an active-site residue. Asp107 is a binding site for Zn(2+). Glu141 (proton acceptor) is an active-site residue. Residues Glu142, Glu170, and His360 each coordinate Zn(2+).

The protein belongs to the peptidase M20A family. DapE subfamily. As to quaternary structure, homodimer. The cofactor is Zn(2+). Co(2+) is required as a cofactor.

It carries out the reaction N-succinyl-(2S,6S)-2,6-diaminopimelate + H2O = (2S,6S)-2,6-diaminopimelate + succinate. Its pathway is amino-acid biosynthesis; L-lysine biosynthesis via DAP pathway; LL-2,6-diaminopimelate from (S)-tetrahydrodipicolinate (succinylase route): step 3/3. Catalyzes the hydrolysis of N-succinyl-L,L-diaminopimelic acid (SDAP), forming succinate and LL-2,6-diaminopimelate (DAP), an intermediate involved in the bacterial biosynthesis of lysine and meso-diaminopimelic acid, an essential component of bacterial cell walls. This chain is Succinyl-diaminopimelate desuccinylase, found in Variovorax paradoxus (strain S110).